We begin with the raw amino-acid sequence, 545 residues long: Esterase-5B (545 aa).

The signal sequence occupies residues 1 to 19; it reads MYCAKLILLLGCFWISSSA. A disulfide bridge links Cys84 with Cys103. Asn113 is a glycosylation site (N-linked (GlcNAc...) asparagine). Residue Ser207 is the Acyl-ester intermediate of the active site. An intrachain disulfide couples Cys259 to Cys271. An N-linked (GlcNAc...) asparagine glycan is attached at Asn421. His467 functions as the Charge relay system in the catalytic mechanism. Residue Asn507 is glycosylated (N-linked (GlcNAc...) asparagine). A disulfide bond links Cys515 and Cys536.

The protein belongs to the type-B carboxylesterase/lipase family. Homodimer.

The protein localises to the secreted. The enzyme catalyses a carboxylic ester + H2O = an alcohol + a carboxylate + H(+). The chain is Esterase-5B (Est-5B) from Drosophila persimilis (Fruit fly).